The following is a 96-amino-acid chain: Co-chaperonin GroES (96 aa).

This sequence belongs to the GroES chaperonin family. As to quaternary structure, heptamer of 7 subunits arranged in a ring. Interacts with the chaperonin GroEL.

The protein localises to the cytoplasm. In terms of biological role, together with the chaperonin GroEL, plays an essential role in assisting protein folding. The GroEL-GroES system forms a nano-cage that allows encapsulation of the non-native substrate proteins and provides a physical environment optimized to promote and accelerate protein folding. GroES binds to the apical surface of the GroEL ring, thereby capping the opening of the GroEL channel. In Pelagibacter ubique (strain HTCC1062), this protein is Co-chaperonin GroES.